A 295-amino-acid polypeptide reads, in one-letter code: GDP-polyphosphate phosphotransferase (295 aa).

A disordered region spans residues 1-28; sequence MDIPSVDVSTATNDGASSRAKGHRSAAP. A compositionally biased stretch (polar residues) spans 7–16; that stretch reads DVSTATNDGA. Phosphohistidine occurs at positions 115 and 247.

This sequence belongs to the polyphosphate kinase 2 (PPK2) family. Class I subfamily. In terms of assembly, interacts with Ndk. In terms of processing, autophosphorylated at His-115 and His-247 using polyP as a phosphate donor.

The enzyme catalyses [phosphate](n) + GTP = [phosphate](n+1) + GDP. In terms of biological role, uses inorganic polyphosphate (polyP) as a donor to convert GDP to GTP. In addition, modulates nucleotide triphosphate synthesis catalyzed by the nucleoside diphosphate kinase (Ndk) in favor of GTP production over CTP or UTP. Plays an important role in survival of M.tuberculosis in macrophages. In Mycobacterium tuberculosis (strain ATCC 25618 / H37Rv), this protein is GDP-polyphosphate phosphotransferase.